The primary structure comprises 1647 residues: MAP kinase-activating death domain protein (1647 aa).

Positions 14-268 (YLVIVGARHP…VPVSGQKRVD (255 aa)) constitute a uDENN domain. Residues 108–122 (EKGEGGAGSRGKEGT) show a composition bias toward basic and acidic residues. A disordered region spans residues 108 to 168 (EKGEGGAGSR…GKRRAKAGSR (61 aa)). Over residues 128–141 (SEEGGTESSESGSS) the composition is skewed to low complexity. Polar residues predominate over residues 142 to 157 (LQPLSADSTPDVNQSP). Ser156 bears the Phosphoserine mark. Positions 158 to 167 (RGKRRAKAGS) are enriched in basic residues. One can recognise a cDENN domain in the interval 289 to 429 (RFTLVDFPLH…ESLELKKHLK (141 aa)). Positions 431–565 (ALASMSLNTQ…LNPTNYAFQR (135 aa)) constitute a dDENN domain. 2 disordered regions span residues 604–636 (ALSV…SSYS) and 678–842 (NQKE…STEG). Acidic residues predominate over residues 615 to 630 (SEPTDDSGSDSMDYDD). Residues Ser689 and Ser692 each carry the phosphoserine modification. The segment covering 689 to 699 (SENSQENPPLR) has biased composition (polar residues). Residues 700–712 (SSSSTTASSSPST) are compositionally biased toward low complexity. A compositionally biased stretch (basic and acidic residues) spans 750–768 (NVDRRQAEIGEGSVRRRIY). A compositionally biased stretch (polar residues) spans 790–804 (ESYTPRFSQHVSGNR). Phosphoserine is present on residues Ser813, Ser818, and Ser820. Residues 827–840 (RASSPNSTVSNTST) are compositionally biased toward low complexity. Ser858, Ser862, Ser916, Ser921, and Ser930 each carry phosphoserine. Disordered stretches follow at residues 913-941 (QKSS…SSEN), 1051-1110 (KEPD…DTRS), and 1146-1243 (VFDL…DSEI). A compositionally biased stretch (polar residues) spans 932–941 (QGRSSNSSEN). A Phosphoserine modification is found at Ser1059. 2 positions are modified to phosphothreonine: Thr1061 and Thr1066. A Phosphoserine modification is found at Ser1110. Polar residues-rich tracts occupy residues 1158 to 1173 (QISA…SSQR), 1189 to 1207 (RSSS…SSGE), and 1234 to 1243 (SRGTLSDSEI). The residue at position 1237 (Thr1237) is a Phosphothreonine. A phosphoserine mark is found at Ser1239 and Ser1270. A Death domain is found at 1340–1415 (GMDQGPQEMI…GLVYSQQINE (76 aa)).

The protein belongs to the MADD family. In terms of assembly, interacts (via death domain) with TNFRSF1A (via death domain). Interacts with PIDD1. Interacts with YWHAZ. Interacts (via death domain) with KIF1B; links the motor KIF1B to Rab3-carrying vesicles in anterograde synaptic vesicle transport. Interacts with KIF1A. Interacts (via uDENN domain) with RAB3A, RAB3B, RAB3C and RAB3D; the GTP-bound form of the Rab proteins is preferred for interaction. As to expression, expressed in testis, ovary, brain and heart. Expressed in spleen, thymus, prostate, testis, ovary, small instestine and colon. Expressed in liver. Not detected in the brain, breast, kidney, lung, ovary, pancreas, testis, uterus, stomach and thyroid. In terms of tissue distribution, expressed in the brain, breast, kidney, lung, ovary, pancreas, testis, uterus, stomach and thyroid.

The protein localises to the cell membrane. It is found in the cytoplasm. It localises to the cell projection. Its subcellular location is the axon. Its function is as follows. Guanyl-nucleotide exchange factor that regulates small GTPases of the Rab family. Converts GDP-bound inactive form of RAB27A and RAB27B to the GTP-bound active forms. Converts GDP-bound inactive form of RAB3A, RAB3C and RAB3D to the GTP-bound active forms, GTPases involved in synaptic vesicle exocytosis and vesicle secretion. Plays a role in synaptic vesicle formation and in vesicle trafficking at the neuromuscular junction. Involved in up-regulating a post-docking step of synaptic exocytosis in central synapses. Probably by binding to the motor proteins KIF1B and KIF1A, mediates motor-dependent transport of GTP-RAB3A-positive vesicles to the presynaptic nerve terminals. Plays a role in TNFA-mediated activation of the MAPK pathway, including ERK1/2. May link TNFRSF1A with MAP kinase activation. May be involved in the regulation of TNFA-induced apoptosis. In Homo sapiens (Human), this protein is MAP kinase-activating death domain protein.